A 753-amino-acid polypeptide reads, in one-letter code: Neuroendocrine convertase 1 (753 aa).

The N-terminal stretch at 1 to 27 (MGRRAWTLQCTAFSLFCAWCAMNSVKA) is a signal peptide. Residues 28–110 (KKQFVNEWAA…QQYEKERSKR (83 aa)) constitute a propeptide that is removed on maturation. The Peptidase S8 domain occupies 129–450 (QWYLQDTRMT…FGLLNAKALV (322 aa)). Aspartate 167 serves as the catalytic Charge relay system. A glycan (N-linked (GlcNAc...) asparagine) is linked at asparagine 173. Histidine 208 (charge relay system) is an active-site residue. Cystine bridges form between cysteine 225-cysteine 374 and cysteine 317-cysteine 347. Serine 382 serves as the catalytic Charge relay system. Asparagine 401 carries an N-linked (GlcNAc...) asparagine glycan. In terms of domain architecture, P/Homo B spans 460 to 597 (SVPEKKECVV…KLILHGTSSQ (138 aa)). An intrachain disulfide couples cysteine 467 to cysteine 494. 2 disordered regions span residues 617-657 (RRGV…RRDE) and 676-695 (SKNS…KPNI).

This sequence belongs to the peptidase S8 family. Furin subfamily. Ca(2+) is required as a cofactor.

The protein resides in the cytoplasmic vesicle. It localises to the secretory vesicle. The catalysed reaction is Release of protein hormones, neuropeptides and renin from their precursors, generally by hydrolysis of -Lys-Arg-|- bonds.. In terms of biological role, involved in the processing of hormone and other protein precursors at sites comprised of pairs of basic amino acid residues. Substrates include POMC, renin, enkephalin, dynorphin, somatostatin, insulin and AGRP. In Bos taurus (Bovine), this protein is Neuroendocrine convertase 1 (PCSK1).